The following is a 232-amino-acid chain: MAAAKEKSDVLVNNEIHNCAELICSICRQLYKSGWVTGTGGGITIRTGDHIVIAPSGVQKEKLEVKDMFVMSLTTRDYLHTPKQNSKPSQCTPLFLSVYTSRDAYACIHTHSQEAVLLSNLFAQKTHFESSGFDVQRYIPRGSKKNGFYKFEDTIRIPFINNTAHESDLQSNLQKAINENPYTCAVIVRNHGIYAWGDSWEDAKMNTEAVEYLFHVFLRDYRIKHSKNCRFF.

Substrate is bound at residue C91. Residues H109, H111, and H191 each coordinate Zn(2+).

The protein belongs to the aldolase class II family. MtnB subfamily. Zn(2+) serves as cofactor.

The protein resides in the cytoplasm. It catalyses the reaction 5-(methylsulfanyl)-D-ribulose 1-phosphate = 5-methylsulfanyl-2,3-dioxopentyl phosphate + H2O. It participates in amino-acid biosynthesis; L-methionine biosynthesis via salvage pathway; L-methionine from S-methyl-5-thio-alpha-D-ribose 1-phosphate: step 2/6. Its function is as follows. Catalyzes the dehydration of methylthioribulose-1-phosphate (MTRu-1-P) into 2,3-diketo-5-methylthiopentyl-1-phosphate (DK-MTP-1-P). The polypeptide is Methylthioribulose-1-phosphate dehydratase (Schizosaccharomyces japonicus (strain yFS275 / FY16936) (Fission yeast)).